The following is a 338-amino-acid chain: Aspartate carbamoyltransferase catalytic subunit (338 aa).

Residues Arg-59 and Thr-60 each coordinate carbamoyl phosphate. Lys-87 contacts L-aspartate. Carbamoyl phosphate is bound by residues Arg-109, His-142, and Gln-145. L-aspartate-binding residues include Arg-182 and Arg-253. Carbamoyl phosphate-binding residues include Gly-294 and Pro-295.

This sequence belongs to the aspartate/ornithine carbamoyltransferase superfamily. ATCase family. Heterododecamer (2C3:3R2) of six catalytic PyrB chains organized as two trimers (C3), and six regulatory PyrI chains organized as three dimers (R2).

It catalyses the reaction carbamoyl phosphate + L-aspartate = N-carbamoyl-L-aspartate + phosphate + H(+). Its pathway is pyrimidine metabolism; UMP biosynthesis via de novo pathway; (S)-dihydroorotate from bicarbonate: step 2/3. In terms of biological role, catalyzes the condensation of carbamoyl phosphate and aspartate to form carbamoyl aspartate and inorganic phosphate, the committed step in the de novo pyrimidine nucleotide biosynthesis pathway. The chain is Aspartate carbamoyltransferase catalytic subunit from Prochlorococcus marinus (strain AS9601).